The sequence spans 270 residues: Envelope glycoprotein UL132 (270 aa).

An N-terminal signal peptide occupies residues 1–29 (MPAPRGLLRATFLVLVAFGLLLHIDFSDA). N31 and N61 each carry an N-linked (GlcNAc...) asparagine; by host glycan. Over residues 33 to 67 (TSSTNVPTSTSSRNTVESTTSSEPTTETNMTTARE) the composition is skewed to low complexity. Positions 33–70 (TSSTNVPTSTSSRNTVESTTSSEPTTETNMTTARESSV) are disordered. Residues 84–104 (ILFYIVTGTSIFSFIAVLIAV) traverse the membrane as a helical segment. Positions 129–179 (DTDDSGGSSPFGSGSRRGSQIPAGFCSSSPYQRLETRDWDEEEEASAARER) are disordered. A compositionally biased stretch (low complexity) spans 133–147 (SGGSSPFGSGSRRGS). The N-linked (GlcNAc...) asparagine; by host glycan is linked to N245.

This sequence belongs to the HHV-5 UL132 family.

It is found in the virion membrane. In Homo sapiens (Human), this protein is Envelope glycoprotein UL132 (UL132).